The chain runs to 197 residues: Putative peptidyl-prolyl cis-trans isomerase (197 aa).

Residues 14–195 (NEIKVVMHTN…YDVVIESIDV (182 aa)) form the PPIase cyclophilin-type domain.

The protein belongs to the cyclophilin-type PPIase family.

It carries out the reaction [protein]-peptidylproline (omega=180) = [protein]-peptidylproline (omega=0). PPIases accelerate the folding of proteins. It catalyzes the cis-trans isomerization of proline imidic peptide bonds in oligopeptides. The protein is Putative peptidyl-prolyl cis-trans isomerase of Staphylococcus epidermidis (strain ATCC 35984 / DSM 28319 / BCRC 17069 / CCUG 31568 / BM 3577 / RP62A).